The chain runs to 304 residues: Killer cell immunoglobulin-like receptor 2DS2 (304 aa).

The signal sequence occupies residues 1–21; it reads MSLMVVSMACVGFFLLQGAWP. Over 22-245 the chain is Extracellular; the sequence is HEGVHRKPSL…SKTGNPRHLH (224 aa). 2 Ig-like C2-type domains span residues 42 to 107 and 142 to 205; these read EETV…VTHS and GESV…FRDS. 2 disulfide bridges follow: C49/C100 and C149/C198. N-linked (GlcNAc...) asparagine glycans are attached at residues N84, N178, and N211. A disordered region spans residues 220–239; sequence VTGNPSNSWPSPTEPSSKTG. The helical transmembrane segment at 246 to 265 threads the bilayer; it reads VLIGTSVVKIPFTILLFFLL. Residues 266–304 are Cytoplasmic-facing; the sequence is HRWCSNKKNAAVMDQEPAGNRTVNSEDSDEQDHQEVSYA. The disordered stretch occupies residues 280 to 304; the sequence is QEPAGNRTVNSEDSDEQDHQEVSYA.

Belongs to the immunoglobulin superfamily.

The protein resides in the cell membrane. In terms of biological role, receptor on natural killer (NK) cells for HLA-C alleles. Does not inhibit the activity of NK cells. The polypeptide is Killer cell immunoglobulin-like receptor 2DS2 (Homo sapiens (Human)).